A 214-amino-acid chain; its full sequence is MRIILLGAPGAGKGTQAQFIMEKYGIPQISTGDMLRAAVKAGSELGLKAKEIMDAGKLVTDELVIALVKERITQEDCRDGFLLDGFPRTIPQADAMKEAGIKVDYVLEFDVPDELIVERIVGRRVHAASGRVYHVKFNPPKVEDKDDVTGEELTIRKDDQEATVRKRLIEYHQQTAPLVSYYHKEADAGNTQYFKLDGTRNVAEVSAELATILG.

10–15 (GAGKGT) is a binding site for ATP. The tract at residues 30–59 (STGDMLRAAVKAGSELGLKAKEIMDAGKLV) is NMP. Residues T31, R36, 57–59 (KLV), 85–88 (GFPR), and Q92 contribute to the AMP site. An LID region spans residues 122-159 (GRRVHAASGRVYHVKFNPPKVEDKDDVTGEELTIRKDD). ATP is bound by residues R123 and 132–133 (VY). Residues R156 and R167 each contribute to the AMP site. ATP is bound at residue R200.

This sequence belongs to the adenylate kinase family. Monomer.

It is found in the cytoplasm. It carries out the reaction AMP + ATP = 2 ADP. It functions in the pathway purine metabolism; AMP biosynthesis via salvage pathway; AMP from ADP: step 1/1. Its function is as follows. Catalyzes the reversible transfer of the terminal phosphate group between ATP and AMP. Plays an important role in cellular energy homeostasis and in adenine nucleotide metabolism. The protein is Adenylate kinase of Yersinia pseudotuberculosis serotype O:1b (strain IP 31758).